A 552-amino-acid chain; its full sequence is uncharacterized protein (552 aa).

This sequence belongs to the transposase 25 family.

This is an uncharacterized protein from Sinorhizobium fredii (strain NBRC 101917 / NGR234).